The primary structure comprises 452 residues: Transcription factor AP-2-delta (452 aa).

Position 239 is a phosphoserine; by PKA (S239). Positions 280-410 (RRKAANVTLL…VLSEMLNYLE (131 aa)) are H-S-H (helix-span-helix), dimerization. Residues 416-452 (KNGGAADSGQGHANSEKAPLRKTSEAAVKEGKTEKTD) form a disordered region. The span at 429–452 (NSEKAPLRKTSEAAVKEGKTEKTD) shows a compositional bias: basic and acidic residues.

Belongs to the AP-2 family. In terms of assembly, binds DNA as a dimer. Can form homodimers or heterodimers with other AP-2 family members. Highly expressed in brain, placenta, skeletal muscle, thymus, small intestine, and prostate, and expressed at lower levels in leukocyte, spleen, testis, ovary and colon. Barely detectable in heart, kidney, liver, lung or pancreas.

It localises to the nucleus. In terms of biological role, sequence-specific DNA-binding protein that interacts with inducible viral and cellular enhancer elements to regulate transcription of selected genes. AP-2 factors bind to the consensus sequence 5'-GCCNNNGGC-3' and activate genes involved in a large spectrum of important biological functions including proper eye, face, body wall, limb and neural tube development. They also suppress a number of genes including MCAM/MUC18, C/EBP alpha and MYC. This Homo sapiens (Human) protein is Transcription factor AP-2-delta.